Here is a 522-residue protein sequence, read N- to C-terminus: Stellatic acid synthase (522 aa).

The helical transmembrane segment at 23-43 threads the bilayer; that stretch reads IYGIYEPLLALFAVYSVAVVV. N-linked (GlcNAc...) asparagine glycosylation is found at Asn-267 and Asn-451. Cys-464 provides a ligand contact to heme. Asn-495 carries N-linked (GlcNAc...) asparagine glycosylation.

Belongs to the cytochrome P450 family. Requires heme as cofactor.

Its subcellular location is the membrane. It catalyses the reaction stellata-2,6,19-triene + 3 reduced [NADPH--hemoprotein reductase] + 3 O2 = stellatate + 3 oxidized [NADPH--hemoprotein reductase] + 4 H2O + 4 H(+). It participates in secondary metabolite biosynthesis; terpenoid biosynthesis. Its function is as follows. Cytochrome P450 monooxygenase; part of the gene cluster that mediates the biosynthesis of the sesterterpene stellatic acid. The first step in the pathway is performed by the stellatatriene synthase that possesses both prenyl transferase and terpene cyclase activity, converting isopentenyl diphosphate and dimethylallyl diphosphate into geranylgeranyl diphosphate (GGDP) and then converting GGDP into stellata-2,6,19-triene. The cytochrome P450 monooxygenase Stl-P450 then catalyzes three successive oxidation reactions on the C-20 methyl group to generate the carboxylic acid of stellatic acid. The sequence is that of Stellatic acid synthase from Emericella variicolor (Aspergillus stellatus).